The chain runs to 557 residues: Ribonuclease J 2 (557 aa).

Zn(2+)-binding residues include His76, His78, His144, and Glu166. Substrate is bound at residue 366 to 370 (HASSH).

It belongs to the metallo-beta-lactamase superfamily. RNA-metabolizing metallo-beta-lactamase-like family. Bacterial RNase J subfamily. Homodimer. Component of a possible RNA degradosome complex composed of cshA, eno, pfkA, pnp, rnjA, rnjB, rnpA and rny. Interacts specifically with RNase J1. It depends on Zn(2+) as a cofactor.

The protein resides in the cytoplasm. Its function is as follows. An RNase that has 5'-3' exonuclease and endonuclease activity, with the exonuclease activity probably being most important in vivo. Involved in maturation of 16S rRNA, rnpB (the RNA component of RNase P) maturation and degradation, and mRNA maturation and/or decay. This subunit probably plays a structural rather than enzymatic role as mutation of its putative active site gives no phenotype, and its deletion is partially complemented by inactive RNase J1. This Staphylococcus aureus (strain NCTC 8325 / PS 47) protein is Ribonuclease J 2.